We begin with the raw amino-acid sequence, 317 residues long: MANLGYLLCLLGLLLCGLSSPGMSRPYNHGSERPIIGVVMQECFGKMAKLGNYYIAASYVKYIESAGARVVPIRPDLSDAEYEELFRSINGVLLPGGGANLTDSGYSRVAKIFFSKALESFDNGDHFPVWGTCLGFEELSVLVSGENLLTSTDTKSKKLPLNFTEGARKSRMFKHFPTELLDSLALENLTANFHKWSLSVKNFTENEKLKKFFNILTTNTDGKTEFISSMEGFKYPVYAVQWHPEKAAFEWKNLGGISHAPNAVKTSFYLAEFLVSEARKNSHHFENVVKETASLIYKFNPIYTGNISSFQQAYMFD.

Positions 1–24 (MANLGYLLCLLGLLLCGLSSPGMS) are cleaved as a signal peptide. The Gamma-glutamyl hydrolase domain maps to 25-317 (RPYNHGSERP…SSFQQAYMFD (293 aa)). N-linked (GlcNAc...) (high mannose) asparagine glycosylation is present at N100. The Nucleophile role is filled by C133. N-linked (GlcNAc...) (high mannose) asparagine glycosylation is found at N162 and N188. N-linked (GlcNAc...) asparagine glycosylation is present at N202. H243 (proton donor) is an active-site residue. Residue N306 is glycosylated (N-linked (GlcNAc...) asparagine).

Belongs to the peptidase C26 family. Homodimer. As to expression, isoform I (more expressed than isoform II in all tissues) is highly expressed in salivary gland, followed by kidney, liver, lung, stomach and uterus, and weakly expressed in small intestine, brain and fetal liver. Also expressed at a lower level in thymus, spleen and skeletal muscle. Also expressed in tumors.

The protein localises to the secreted. It localises to the extracellular space. Its subcellular location is the lysosome. It is found in the melanosome. The catalysed reaction is (6S)-5,6,7,8-tetrahydrofolyl-(gamma-L-Glu)(n) + (n-1) H2O = (6S)-5,6,7,8-tetrahydrofolate + (n-1) L-glutamate. In terms of biological role, hydrolyzes the polyglutamate sidechains of pteroylpolyglutamates. Progressively removes gamma-glutamyl residues from pteroylpoly-gamma-glutamate to yield pteroyl-alpha-glutamate (folic acid) and free glutamate. May play an important role in the bioavailability of dietary pteroylpolyglutamates and in the metabolism of pteroylpolyglutamates and antifolates. The chain is Gamma-glutamyl hydrolase (Ggh) from Mus musculus (Mouse).